A 290-amino-acid polypeptide reads, in one-letter code: Glycine--tRNA ligase alpha subunit (290 aa).

The protein belongs to the class-II aminoacyl-tRNA synthetase family. As to quaternary structure, tetramer of two alpha and two beta subunits.

Its subcellular location is the cytoplasm. The catalysed reaction is tRNA(Gly) + glycine + ATP = glycyl-tRNA(Gly) + AMP + diphosphate. The sequence is that of Glycine--tRNA ligase alpha subunit from Zymomonas mobilis subsp. mobilis (strain ATCC 31821 / ZM4 / CP4).